The primary structure comprises 623 residues: Glutamyl-tRNA(Gln) amidotransferase subunit E (623 aa).

It belongs to the GatB/GatE family. GatE subfamily. As to quaternary structure, heterodimer of GatD and GatE.

It catalyses the reaction L-glutamyl-tRNA(Gln) + L-glutamine + ATP + H2O = L-glutaminyl-tRNA(Gln) + L-glutamate + ADP + phosphate + H(+). In terms of biological role, allows the formation of correctly charged Gln-tRNA(Gln) through the transamidation of misacylated Glu-tRNA(Gln) in organisms which lack glutaminyl-tRNA synthetase. The reaction takes place in the presence of glutamine and ATP through an activated gamma-phospho-Glu-tRNA(Gln). The GatDE system is specific for glutamate and does not act on aspartate. The chain is Glutamyl-tRNA(Gln) amidotransferase subunit E from Haloarcula marismortui (strain ATCC 43049 / DSM 3752 / JCM 8966 / VKM B-1809) (Halobacterium marismortui).